The chain runs to 493 residues: Trigger factor (493 aa).

Residues 169–254 enclose the PPIase FKBP-type domain; that stretch reads GDRVTMDYLG…VKEVAAPAET (86 aa). The interval 439–493 is disordered; that stretch reads ELLAEDEDGDDTKPAKKSAKKKAAKAEDASAEGEEAAPKKKAAAKKKAADEGDAE.

This sequence belongs to the FKBP-type PPIase family. Tig subfamily.

Its subcellular location is the cytoplasm. It carries out the reaction [protein]-peptidylproline (omega=180) = [protein]-peptidylproline (omega=0). Its function is as follows. Involved in protein export. Acts as a chaperone by maintaining the newly synthesized protein in an open conformation. Functions as a peptidyl-prolyl cis-trans isomerase. The polypeptide is Trigger factor (Allorhizobium ampelinum (strain ATCC BAA-846 / DSM 112012 / S4) (Agrobacterium vitis (strain S4))).